A 554-amino-acid chain; its full sequence is Developmental and secondary metabolism regulator ve-1 (554 aa).

One can recognise a Velvet domain in the interval 31-230; sequence GRKLWYSLRV…AEQGCRVRIR (200 aa). Positions 45–50 match the Nuclear localization signal motif; it reads LRARAC. Residues 166-175 are compositionally biased toward basic and acidic residues; it reads TKEDKDKDPE. 3 disordered regions span residues 166 to 190, 232 to 430, and 465 to 528; these read TKEDKDKDPEEPNAPPDGSPGSFDF, DVRM…PHRL, and PRAY…VDDK. A compositionally biased stretch (polar residues) spans 276-292; the sequence is RSMSGSTERTPYSSISD. Pro residues-rich tracts occupy residues 363-372 and 485-494; these read SYPPPPPPHQ and LPPPPPPPPQ. Positions 455–487 are PEST; that stretch reads SPSNMAAPPYPRAYSVSNSGGLTSAGGYNQLPP. Positions 500 to 528 are enriched in basic and acidic residues; that stretch reads RAHDQTFRADPEMRRYQDGARERESVDDK.

Belongs to the velvet family. VeA subfamily. In terms of assembly, component of the heterotrimeric velvet complex composed of lae-1, ve-1 and vel-2; Ve-1 acting as a bridging protein between lae-1 and vel-2.

The protein localises to the nucleus. It is found in the cytoplasm. In terms of biological role, component of the velvet transcription factor complex that controls sexual/asexual developmental ratio in response to light, promoting sexual development in the darkness while stimulating asexual sporulation under illumination. The velvet complex hat acts as a global regulator for secondary metabolite gene expression. This chain is Developmental and secondary metabolism regulator ve-1, found in Neurospora crassa (strain ATCC 24698 / 74-OR23-1A / CBS 708.71 / DSM 1257 / FGSC 987).